The chain runs to 161 residues: Decarboxylase (161 aa).

Positions 29–131 (QGMSEEAYRK…VGDHENFADT (103 aa)) constitute an EthD domain.

The protein belongs to the tpcK family.

The enzyme catalyses atrochrysone carboxylate + H(+) = atrochrysone + CO2. Its pathway is secondary metabolite biosynthesis. Decarboxylase; part of the gene cluster that mediates the biosynthesis of monodictyphenone, a prenyl xanthone derivative. The pathway begins with the synthesis of atrochrysone thioester by the polyketide synthase (PKS) mdpG. The atrochrysone carboxyl ACP thioesterase mdpF then breaks the thioester bond and releases the atrochrysone carboxylic acid from mdpG. The atrochrysone carboxylic acid is then converted to atrochrysone which is further transformed into emodin anthrone by mdpH-1 and mdpH-2. Emodin is further modified to yield monodictyphenone via several steps involving mdpB, mdpC mdpJ, mdpK and mdpL. These enzymes with xptA, xptB and xptC are also proposed to be involved in the synthesis of shamixanthone from emodin. Especially, direct reduction of emodin by the short chain dehydrogenase mdpC followed by dehydration catalyzed by the scytalone dehydratase-like protein mdpB gives loss of oxygen and formation of chrysophanol intermediate in two simple steps. The chain is Decarboxylase from Emericella nidulans (strain FGSC A4 / ATCC 38163 / CBS 112.46 / NRRL 194 / M139) (Aspergillus nidulans).